Reading from the N-terminus, the 792-residue chain is Phenylalanine--tRNA ligase beta subunit (792 aa).

Positions 39–147 (GEALDLILVA…EDAPIGTPLA (109 aa)) constitute a tRNA-binding domain. The 76-residue stretch at 400–475 (PAPASILLRR…RIRGYEHLPT (76 aa)) folds into the B5 domain. 4 residues coordinate Mg(2+): D453, D459, E462, and E463. Residues 698–791 (SRFPFVRRDL…IQQRHDVRIR (94 aa)) form the FDX-ACB domain.

This sequence belongs to the phenylalanyl-tRNA synthetase beta subunit family. Type 1 subfamily. In terms of assembly, tetramer of two alpha and two beta subunits. Requires Mg(2+) as cofactor.

The protein resides in the cytoplasm. It carries out the reaction tRNA(Phe) + L-phenylalanine + ATP = L-phenylalanyl-tRNA(Phe) + AMP + diphosphate + H(+). This chain is Phenylalanine--tRNA ligase beta subunit, found in Xylella fastidiosa (strain Temecula1 / ATCC 700964).